Consider the following 296-residue polypeptide: Acetylglutamate kinase (296 aa).

Substrate is bound by residues 67–68 (GG), Arg-89, and Asn-194.

It belongs to the acetylglutamate kinase family. ArgB subfamily.

It localises to the cytoplasm. It catalyses the reaction N-acetyl-L-glutamate + ATP = N-acetyl-L-glutamyl 5-phosphate + ADP. Its pathway is amino-acid biosynthesis; L-arginine biosynthesis; N(2)-acetyl-L-ornithine from L-glutamate: step 2/4. In terms of biological role, catalyzes the ATP-dependent phosphorylation of N-acetyl-L-glutamate. The chain is Acetylglutamate kinase from Brucella abortus (strain S19).